The primary structure comprises 122 residues: Large ribosomal subunit protein uL14c (122 aa).

This sequence belongs to the universal ribosomal protein uL14 family. In terms of assembly, part of the 50S ribosomal subunit.

The protein localises to the plastid. Its subcellular location is the chloroplast. Functionally, binds to 23S rRNA. The chain is Large ribosomal subunit protein uL14c from Phaseolus vulgaris (Kidney bean).